A 122-amino-acid polypeptide reads, in one-letter code: Large ribosomal subunit protein bL12 (122 aa).

The protein belongs to the bacterial ribosomal protein bL12 family. As to quaternary structure, homodimer. Part of the ribosomal stalk of the 50S ribosomal subunit. Forms a multimeric L10(L12)X complex, where L10 forms an elongated spine to which 2 to 4 L12 dimers bind in a sequential fashion. Binds GTP-bound translation factors.

In terms of biological role, forms part of the ribosomal stalk which helps the ribosome interact with GTP-bound translation factors. Is thus essential for accurate translation. The chain is Large ribosomal subunit protein bL12 from Vibrio campbellii (strain ATCC BAA-1116).